Consider the following 261-residue polypeptide: Pyridoxine 5'-phosphate synthase (261 aa).

Residue Asn-6 participates in 3-amino-2-oxopropyl phosphate binding. 8–9 is a 1-deoxy-D-xylulose 5-phosphate binding site; the sequence is DH. Arg-17 is a 3-amino-2-oxopropyl phosphate binding site. His-42 functions as the Proton acceptor in the catalytic mechanism. 2 residues coordinate 1-deoxy-D-xylulose 5-phosphate: Arg-44 and His-49. The Proton acceptor role is filled by Glu-69. Thr-99 lines the 1-deoxy-D-xylulose 5-phosphate pocket. His-213 functions as the Proton donor in the catalytic mechanism. Residues Gly-214 and 235–236 contribute to the 3-amino-2-oxopropyl phosphate site; that span reads GQ.

It belongs to the PNP synthase family. As to quaternary structure, homooctamer; tetramer of dimers.

The protein localises to the cytoplasm. The enzyme catalyses 3-amino-2-oxopropyl phosphate + 1-deoxy-D-xylulose 5-phosphate = pyridoxine 5'-phosphate + phosphate + 2 H2O + H(+). The protein operates within cofactor biosynthesis; pyridoxine 5'-phosphate biosynthesis; pyridoxine 5'-phosphate from D-erythrose 4-phosphate: step 5/5. Functionally, catalyzes the complicated ring closure reaction between the two acyclic compounds 1-deoxy-D-xylulose-5-phosphate (DXP) and 3-amino-2-oxopropyl phosphate (1-amino-acetone-3-phosphate or AAP) to form pyridoxine 5'-phosphate (PNP) and inorganic phosphate. In Aliarcobacter butzleri (strain RM4018) (Arcobacter butzleri), this protein is Pyridoxine 5'-phosphate synthase.